A 770-amino-acid chain; its full sequence is Arf-GAP with coiled-coil, ANK repeat and PH domain-containing protein 2 (770 aa).

Residues 6–226 (DFEECLKDSP…MKDLGAQLDR (221 aa)) enclose the BAR domain. The 96-residue stretch at 266 to 361 (GIVMEGYLFK…WIKAVQTSIA (96 aa)) folds into the PH domain. The interval 371 to 392 (SEKLDKKSSPSTGSLDSGSESK) is disordered. The segment covering 379 to 388 (SPSTGSLDSG) has biased composition (low complexity). S384 and S387 each carry phosphoserine. The region spanning 399–520 (ESALQRVQCI…KFVDKYSTLL (122 aa)) is the Arf-GAP domain. A C4-type zinc finger spans residues 414–437 (CCDCGLADPRWASINLGITLCIEC). The residue at position 521 (S521) is a Phosphoserine. A compositionally biased stretch (polar residues) spans 548-561 (TPVKSNDSGIQQCS). A disordered region spans residues 548–571 (TPVKSNDSGIQQCSDDGRESLPST). Residues S573 and S576 each carry the phosphoserine modification. 3 ANK repeats span residues 632–661 (NQATPLIQAVLGGSLVTCEFLLQNGANVNQ), 665–694 (QGRGPLHHATVLGHTGQVCLFLKRGANQHA), and 698–727 (EGKDPLSIAVEAANADIVTLLRLARMNEEM). A Phosphotyrosine modification is found at Y734. Residue S767 is modified to Phosphoserine.

In terms of assembly, interacts with RAB35 (GTP-bound form); the interaction is direct and probably recruits ACAP2 to membranes. Interacts with MICALL1; the interaction is indirect through RAB35.

It localises to the endosome membrane. It is found in the cell membrane. Its activity is regulated as follows. GAP activity stimulated by phosphatidylinositol 4,5-bisphosphate (PIP2) and phosphatidic acid. In terms of biological role, GTPase-activating protein (GAP) for ADP ribosylation factor 6 (ARF6). Doesn't show GAP activity for RAB35. The protein is Arf-GAP with coiled-coil, ANK repeat and PH domain-containing protein 2 (Acap2) of Rattus norvegicus (Rat).